The primary structure comprises 379 residues: Putative zinc metalloprotease BMEI0829 (379 aa).

Zn(2+) is bound at residue histidine 33. The active site involves glutamate 34. A Zn(2+)-binding site is contributed by histidine 37. Helical transmembrane passes span 39 to 61, 122 to 144, 305 to 327, and 355 to 377; these read LVAR…ELLG, VFAG…FALY, FDWL…LFPL, and IFYR…NDLF. Positions 133–208 constitute a PDZ domain; it reads TIAIFSVFFA…LNFTVERDGK (76 aa).

This sequence belongs to the peptidase M50B family. It depends on Zn(2+) as a cofactor.

It localises to the cell inner membrane. In Brucella melitensis biotype 1 (strain ATCC 23456 / CCUG 17765 / NCTC 10094 / 16M), this protein is Putative zinc metalloprotease BMEI0829.